Consider the following 236-residue polypeptide: Large ribosomal subunit protein uL3 (236 aa).

This sequence belongs to the universal ribosomal protein uL3 family. As to quaternary structure, part of the 50S ribosomal subunit. Forms a cluster with proteins L14 and L19.

One of the primary rRNA binding proteins, it binds directly near the 3'-end of the 23S rRNA, where it nucleates assembly of the 50S subunit. The sequence is that of Large ribosomal subunit protein uL3 from Mycoplasmoides gallisepticum (strain R(low / passage 15 / clone 2)) (Mycoplasma gallisepticum).